A 629-amino-acid polypeptide reads, in one-letter code: tRNA uridine 5-carboxymethylaminomethyl modification enzyme MnmG (629 aa).

An FAD-binding site is contributed by 13–18 (GGGHAG). Position 273-287 (273-287 (GPRYCPSIEDKVMRF)) interacts with NAD(+).

It belongs to the MnmG family. Homodimer. Heterotetramer of two MnmE and two MnmG subunits. It depends on FAD as a cofactor.

It is found in the cytoplasm. Functionally, NAD-binding protein involved in the addition of a carboxymethylaminomethyl (cmnm) group at the wobble position (U34) of certain tRNAs, forming tRNA-cmnm(5)s(2)U34. The protein is tRNA uridine 5-carboxymethylaminomethyl modification enzyme MnmG of Photorhabdus laumondii subsp. laumondii (strain DSM 15139 / CIP 105565 / TT01) (Photorhabdus luminescens subsp. laumondii).